An 879-amino-acid polypeptide reads, in one-letter code: Alanine--tRNA ligase (879 aa).

Residues H566, H570, C668, and H672 each contribute to the Zn(2+) site.

This sequence belongs to the class-II aminoacyl-tRNA synthetase family. Zn(2+) is required as a cofactor.

It localises to the cytoplasm. The catalysed reaction is tRNA(Ala) + L-alanine + ATP = L-alanyl-tRNA(Ala) + AMP + diphosphate. Catalyzes the attachment of alanine to tRNA(Ala) in a two-step reaction: alanine is first activated by ATP to form Ala-AMP and then transferred to the acceptor end of tRNA(Ala). Also edits incorrectly charged Ser-tRNA(Ala) and Gly-tRNA(Ala) via its editing domain. The protein is Alanine--tRNA ligase of Listeria monocytogenes serovar 1/2a (strain ATCC BAA-679 / EGD-e).